We begin with the raw amino-acid sequence, 175 residues long: ATP synthase subunit delta (175 aa).

The protein belongs to the ATPase delta chain family. F-type ATPases have 2 components, F(1) - the catalytic core - and F(0) - the membrane proton channel. F(1) has five subunits: alpha(3), beta(3), gamma(1), delta(1), epsilon(1). F(0) has three main subunits: a(1), b(2) and c(10-14). The alpha and beta chains form an alternating ring which encloses part of the gamma chain. F(1) is attached to F(0) by a central stalk formed by the gamma and epsilon chains, while a peripheral stalk is formed by the delta and b chains.

The protein localises to the cell membrane. Its function is as follows. F(1)F(0) ATP synthase produces ATP from ADP in the presence of a proton or sodium gradient. F-type ATPases consist of two structural domains, F(1) containing the extramembraneous catalytic core and F(0) containing the membrane proton channel, linked together by a central stalk and a peripheral stalk. During catalysis, ATP synthesis in the catalytic domain of F(1) is coupled via a rotary mechanism of the central stalk subunits to proton translocation. This protein is part of the stalk that links CF(0) to CF(1). It either transmits conformational changes from CF(0) to CF(1) or is implicated in proton conduction. This chain is ATP synthase subunit delta, found in Brevibacillus brevis (strain 47 / JCM 6285 / NBRC 100599).